The following is a 252-amino-acid chain: PF03932 family protein CutC (252 aa).

This sequence belongs to the CutC family.

The protein localises to the cytoplasm. The protein is PF03932 family protein CutC of Pectobacterium atrosepticum (strain SCRI 1043 / ATCC BAA-672) (Erwinia carotovora subsp. atroseptica).